Consider the following 452-residue polypeptide: RNA polymerase II-associated protein rba50 (452 aa).

Disordered stretches follow at residues 60–83, 125–202, and 223–261; these read LRKN…IDEE, EREL…QTKR, and PIKG…PLEF. The span at 125-135 shows a compositional bias: basic and acidic residues; it reads ERELAQRKDRS. Residues 136 to 154 show a composition bias toward polar residues; the sequence is SQVNTPDLSQRPSDDSFLS. Basic and acidic residues predominate over residues 156–165; sequence EKLRSSEKLN. Low complexity predominate over residues 170–191; sequence SVLSSEAVDSSSGSPSPPMALS.

It belongs to the RPAP1 family. As to quaternary structure, interacts with RNA polymerase II.

The protein localises to the cytoplasm. It localises to the nucleus. Functionally, forms an interface between the RNA polymerase II enzyme and chaperone/scaffolding proteins, suggesting that it is required to connect RNA polymerase II to regulators of protein complex formation. The protein is RNA polymerase II-associated protein rba50 (rba50) of Schizosaccharomyces pombe (strain 972 / ATCC 24843) (Fission yeast).